The primary structure comprises 310 residues: Aspartate carbamoyltransferase catalytic subunit (310 aa).

Carbamoyl phosphate is bound by residues Arg-59 and Thr-60. Lys-87 is an L-aspartate binding site. 3 residues coordinate carbamoyl phosphate: Arg-109, His-137, and Gln-140. Positions 170 and 225 each coordinate L-aspartate. The carbamoyl phosphate site is built by Gly-266 and Pro-267.

Belongs to the aspartate/ornithine carbamoyltransferase superfamily. ATCase family. As to quaternary structure, heterododecamer (2C3:3R2) of six catalytic PyrB chains organized as two trimers (C3), and six regulatory PyrI chains organized as three dimers (R2).

It carries out the reaction carbamoyl phosphate + L-aspartate = N-carbamoyl-L-aspartate + phosphate + H(+). It participates in pyrimidine metabolism; UMP biosynthesis via de novo pathway; (S)-dihydroorotate from bicarbonate: step 2/3. Functionally, catalyzes the condensation of carbamoyl phosphate and aspartate to form carbamoyl aspartate and inorganic phosphate, the committed step in the de novo pyrimidine nucleotide biosynthesis pathway. The chain is Aspartate carbamoyltransferase catalytic subunit from Pelobacter propionicus (strain DSM 2379 / NBRC 103807 / OttBd1).